The chain runs to 2617 residues: Ubiquitin carboxyl-terminal hydrolase 24 (2617 aa).

Residues 3–44 (SEEEQHMTTLLCMGFSDPATIRKALRLAKNDINEAVALLTNE) form the UBA domain. The interval 45–99 (RPGLDYGGYEPMDSGGPSPGPGGGPRGDSGSDGSGPSRGGSTGGGGGFDPPPAYH) is disordered. Serine 62 and serine 85 each carry phosphoserine. A compositionally biased stretch (gly residues) spans 65 to 92 (PGGGPRGDSGSDGSGPSRGGSTGGGGGF). Phosphotyrosine is present on tyrosine 939. 2 disordered regions span residues 1030–1056 (KTSG…SGAF) and 1127–1148 (LLSE…QQHQ). Low complexity-rich tracts occupy residues 1031-1056 (TSGS…SGAF) and 1128-1148 (LSET…QQHQ). Residues serine 1138 and serine 1282 each carry the phosphoserine modification. One can recognise a USP domain in the interval 1686 to 2039 (VGLRNGGATC…NAYMLFYQRV (354 aa)). Cysteine 1695 serves as the catalytic Nucleophile. The segment at 1920 to 1942 (QDSSSEVGENGRNMDQGGGGSPR) is disordered. The residue at position 1940 (serine 1940) is a Phosphoserine. Histidine 1967 serves as the catalytic Proton acceptor. 3 positions are modified to phosphoserine: serine 2044, serine 2074, and serine 2558. The tract at residues 2060–2087 (AEDLSLSAPSSPEISPQSSPRPHRPNND) is disordered. Residues 2066-2079 (SAPSSPEISPQSSP) are compositionally biased toward low complexity. Threonine 2562 carries the post-translational modification Phosphothreonine. Residues 2572–2617 (EKEQSGSSNGSESSPANENGERHLQQGSESPMMIGELRSDLDDVDP) form a disordered region. The span at 2576-2589 (SGSSNGSESSPANE) shows a compositional bias: low complexity. Residue serine 2601 is modified to Phosphoserine. Residues 2608–2617 (LRSDLDDVDP) show a composition bias toward basic and acidic residues.

Belongs to the peptidase C19 family.

It carries out the reaction Thiol-dependent hydrolysis of ester, thioester, amide, peptide and isopeptide bonds formed by the C-terminal Gly of ubiquitin (a 76-residue protein attached to proteins as an intracellular targeting signal).. In terms of biological role, protease that can remove conjugated ubiquitin from target proteins and polyubiquitin chains. Deubiquitinates DDB2, preventing its proteasomal degradation. This is Ubiquitin carboxyl-terminal hydrolase 24 (Usp24) from Mus musculus (Mouse).